We begin with the raw amino-acid sequence, 425 residues long: Serine/threonine transporter SstT (425 aa).

Helical transmembrane passes span 11-31 (FLNG…LILA), 43-63 (FLGS…VFVL), 91-111 (LFAA…LVLV), 141-161 (ALVS…GFAL), 182-202 (IVHL…AGTI), 216-236 (LLAV…PIIV), 290-310 (IPLG…VLTL), 316-336 (LGIE…AVSA), and 363-383 (VAMQ…SAET).

The protein belongs to the dicarboxylate/amino acid:cation symporter (DAACS) (TC 2.A.23) family.

The protein resides in the cell inner membrane. It carries out the reaction L-serine(in) + Na(+)(in) = L-serine(out) + Na(+)(out). It catalyses the reaction L-threonine(in) + Na(+)(in) = L-threonine(out) + Na(+)(out). Functionally, involved in the import of serine and threonine into the cell, with the concomitant import of sodium (symport system). The protein is Serine/threonine transporter SstT of Psychromonas ingrahamii (strain DSM 17664 / CCUG 51855 / 37).